Here is a 115-residue protein sequence, read N- to C-terminus: Probable non-functional immunoglobulin heavy variable 8-51-1 (115 aa).

The first 17 residues, 1-17, serve as a signal peptide directing secretion; it reads MLVCVLLYSFRLFGIQG. The segment at 18–42 is framework-1; sequence EAQLTESGGDLVHLEGPLRLSCAAS. The Ig-like domain maps to 19–115; that stretch reads AQLTESGGDL…QNMAAFNCAG (97 aa). A complementarity-determining-1 region spans residues 43 to 50; sequence WFTFSIYE. Positions 51 to 67 are framework-2; the sequence is IHWVCQASGKGLEWVAV. Residues cysteine 55 and cysteine 113 are joined by a disulfide bond. The tract at residues 68–75 is complementarity-determining-2; the sequence is IWRGESHQ. The interval 76 to 113 is framework-3; it reads YNADYVRGRLTTSRDNTKYMLYMQMISLRTQNMAAFNC. The complementarity-determining-3 stretch occupies residues 114–115; sequence AG.

Immunoglobulins are composed of two identical heavy chains and two identical light chains; disulfide-linked.

The protein resides in the secreted. Its subcellular location is the cell membrane. In terms of biological role, probable non-functional open reading frame (ORF) of V region of the variable domain of immunoglobulin heavy chains. Non-functional ORF generally cannot participate in the synthesis of a productive immunoglobulin chain due to altered V-(D)-J or switch recombination and/or splicing site (at mRNA level) and/or conserved amino acid change (protein level). Immunoglobulins, also known as antibodies, are membrane-bound or secreted glycoproteins produced by B lymphocytes. In the recognition phase of humoral immunity, the membrane-bound immunoglobulins serve as receptors which, upon binding of a specific antigen, trigger the clonal expansion and differentiation of B lymphocytes into immunoglobulins-secreting plasma cells. Secreted immunoglobulins mediate the effector phase of humoral immunity, which results in the elimination of bound antigens. The antigen binding site is formed by the variable domain of one heavy chain, together with that of its associated light chain. Thus, each immunoglobulin has two antigen binding sites with remarkable affinity for a particular antigen. The variable domains are assembled by a process called V-(D)-J rearrangement and can then be subjected to somatic hypermutations which, after exposure to antigen and selection, allow affinity maturation for a particular antigen. This chain is Probable non-functional immunoglobulin heavy variable 8-51-1, found in Homo sapiens (Human).